A 302-amino-acid polypeptide reads, in one-letter code: GrpE protein homolog 1, mitochondrial (302 aa).

The transit peptide at 1 to 39 directs the protein to the mitochondrion; sequence MLVSRVLSRVSRSAGLRSSFSSVVTPKRNQIPIVASRFH. The interval 77 to 97 is disordered; that stretch reads SAEPKGNESNTEVPKTGETSE.

Belongs to the GrpE family. In terms of assembly, probable component of the PAM complex, at least composed of SSC1 (mtHsp70), MGE1, TIM44, PAM16/TIM16, PAM17 and PAM18/TIM14. Interacts with SSQ1.

The protein resides in the mitochondrion matrix. Functionally, essential component of the PAM complex, a complex required for the translocation of transit peptide-containing proteins from the inner membrane into the mitochondrial matrix in an ATP-dependent manner. Seems to control the nucleotide-dependent binding of mitochondrial HSP70 to substrate proteins. Binds ATP. Interacts with copper ions Cu(2+). The protein is GrpE protein homolog 1, mitochondrial of Arabidopsis thaliana (Mouse-ear cress).